A 265-amino-acid polypeptide reads, in one-letter code: Novel plant SNARE 11 (265 aa).

Residues Met1–Cys215 lie on the Cytoplasmic side of the membrane. The stretch at Gln30–Ala75 forms a coiled coil. Positions Asn144–Ile206 constitute a t-SNARE coiled-coil homology domain. Residues Ile216–Val236 form a helical; Anchor for type IV membrane protein membrane-spanning segment. Residues Asn237–Tyr265 lie on the Vesicular side of the membrane.

This sequence belongs to the novel plant SNARE family. As to quaternary structure, interacts with KNOLLE to form a t-SNARE complex. Does not interact with SYP21, VTI12 or VPS45. Expressed in roots, stems, flower, siliques, expanding leaves, but not in mature leaves. Not limited to dividing cells.

The protein resides in the membrane. T-SNARE involved in diverse vesicle trafficking and membrane fusion processes, including cell plate formation. The protein is Novel plant SNARE 11 (NPSN11) of Arabidopsis thaliana (Mouse-ear cress).